The chain runs to 353 residues: Uroporphyrinogen decarboxylase (353 aa).

Substrate-binding positions include 30 to 34, Asp-79, Tyr-154, Ser-209, and His-332; that span reads RQAGR.

This sequence belongs to the uroporphyrinogen decarboxylase family. Homodimer.

The protein localises to the cytoplasm. It carries out the reaction uroporphyrinogen III + 4 H(+) = coproporphyrinogen III + 4 CO2. Its pathway is porphyrin-containing compound metabolism; protoporphyrin-IX biosynthesis; coproporphyrinogen-III from 5-aminolevulinate: step 4/4. Its function is as follows. Catalyzes the decarboxylation of four acetate groups of uroporphyrinogen-III to yield coproporphyrinogen-III. The protein is Uroporphyrinogen decarboxylase of Mycobacterium marinum (strain ATCC BAA-535 / M).